The primary structure comprises 193 residues: Glycerol-3-phosphate acyltransferase (193 aa).

Transmembrane regions (helical) follow at residues 2-22, 76-96, 112-132, and 152-172; these read LIAL…GLIV, VPIH…FPVF, LLFY…VFLF, and CLFV…AFVI.

Belongs to the PlsY family. Probably interacts with PlsX.

It localises to the cell membrane. It carries out the reaction an acyl phosphate + sn-glycerol 3-phosphate = a 1-acyl-sn-glycero-3-phosphate + phosphate. It participates in lipid metabolism; phospholipid metabolism. Catalyzes the transfer of an acyl group from acyl-phosphate (acyl-PO(4)) to glycerol-3-phosphate (G3P) to form lysophosphatidic acid (LPA). This enzyme utilizes acyl-phosphate as fatty acyl donor, but not acyl-CoA or acyl-ACP. This Bacillus velezensis (strain DSM 23117 / BGSC 10A6 / LMG 26770 / FZB42) (Bacillus amyloliquefaciens subsp. plantarum) protein is Glycerol-3-phosphate acyltransferase.